Here is a 162-residue protein sequence, read N- to C-terminus: Phosphopantetheine adenylyltransferase (162 aa).

Ser9 contacts substrate. ATP-binding positions include 9-10 (SF) and His17. Substrate contacts are provided by Lys41, Leu73, and Lys87. ATP contacts are provided by residues 88–90 (GLR), Glu98, and 122–128 (YSFLSSS).

This sequence belongs to the bacterial CoaD family. As to quaternary structure, homohexamer. Mg(2+) is required as a cofactor.

It is found in the cytoplasm. It carries out the reaction (R)-4'-phosphopantetheine + ATP + H(+) = 3'-dephospho-CoA + diphosphate. It functions in the pathway cofactor biosynthesis; coenzyme A biosynthesis; CoA from (R)-pantothenate: step 4/5. In terms of biological role, reversibly transfers an adenylyl group from ATP to 4'-phosphopantetheine, yielding dephospho-CoA (dPCoA) and pyrophosphate. This chain is Phosphopantetheine adenylyltransferase, found in Salinispora tropica (strain ATCC BAA-916 / DSM 44818 / JCM 13857 / NBRC 105044 / CNB-440).